The following is a 366-amino-acid chain: MEDNLPVNVREYQELAKKALPKMAYDYINGGAEDEHTLRENIAAYTRIILRPRVLVDVSKIDMSTTLLGYTMRSPIIVAPTGGHKLAHPEGEKATARAAASCNAIMVLSFSSSCKIEDVASSCNAIRFYQLYVYKNRNVSATLVRRAESCGFKALLLTVDTPMLGRREADIRNKMVFPRSGNLEGLMTTDDHDTTNGSQLERFARATLDPSLSWKDIEWLKSITSMPIFLKGIVTAEDARRAVEAGVAGVIVSNHGARQLDYAPATIAALEEVVRAVAGAVPVLVDGGIRRGTDVFKALALGARAVMVGRPVFFGLAARGEAGARHVIEMLNGELEVAMALCGCRSVGEITRSHVMTEGDRIRSLL.

An FMN hydroxy acid dehydrogenase domain is found at 1–360 (MEDNLPVNVR…TRSHVMTEGD (360 aa)). Tyr-27 contacts a 2-oxocarboxylate. FMN contacts are provided by residues 80–82 (PTG), Ser-109, 130–132 (QLY), and Thr-158. Residue Tyr-132 participates in a 2-oxocarboxylate binding. Residue Arg-167 participates in a 2-oxocarboxylate binding. Residues Lys-231 and Ser-253 each coordinate FMN. The active-site Proton acceptor is the His-255. Position 258 (Arg-258) interacts with a 2-oxocarboxylate. FMN contacts are provided by residues 286-290 (DGGIR) and 309-310 (GR). The short motif at 364–366 (SLL) is the Microbody targeting signal element.

Belongs to the FMN-dependent alpha-hydroxy acid dehydrogenase family. Homotetramer. Binds to CATB and CATC; these interactions are disturbed by alpha-hydroxy-2-pyridinemethanesulfonic acid (HPMS) and salicylic acid (SA). It depends on FMN as a cofactor.

It localises to the peroxisome. The catalysed reaction is a (2S)-2-hydroxycarboxylate + O2 = a 2-oxocarboxylate + H2O2. It participates in lipid metabolism; fatty acid metabolism. Oxidase that catalyzes the oxidation of a broad range of 2-hydroxyacids to the corresponding 2-oxoacids, with a reduction of O2 to H2O2. May be involved in a general medium- and long-chain fatty acid catabolic pathway such as alpha-oxidation. This is Peroxisomal (S)-2-hydroxy-acid oxidase GLO4 (GLO4) from Oryza sativa subsp. japonica (Rice).